Reading from the N-terminus, the 372-residue chain is Coxsackievirus and adenovirus receptor homolog (372 aa).

A signal peptide spans 1-22 (MDMRTSFLCVTYVILLTGSACG). 2 consecutive Ig-like C2-type domains span residues 23–140 (LQIT…YLLT) and 130–234 (PGIA…VTIT). The Extracellular portion of the chain corresponds to 23–241 (LQITSTGQTS…TITQPPNTAG (219 aa)). Intrachain disulfides connect C45/C124, C150/C227, and C166/C216. N205 is a glycosylation site (N-linked (GlcNAc...) asparagine). The helical transmembrane segment at 242–262 (IIAGVIICILLLLILLALILF) threads the bilayer. Topologically, residues 263–372 (CCCRARHKKK…PAQNKDGSIV (110 aa)) are cytoplasmic. The disordered stretch occupies residues 286–352 (PPPKSRVSTA…PPSRMAGPNL (67 aa)). Residues 291 to 317 (RVSTARSFTSVGSQRSSLGSMSPSNLH) are compositionally biased toward polar residues. Basic and acidic residues predominate over residues 318-336 (EYSKPQYDKIPSEEYDRPP).

In terms of assembly, monomer. Probably homodimer formed by 2 molecules on adjacent cells.

It is found in the cell membrane. Its subcellular location is the basolateral cell membrane. The protein resides in the cell junction. It localises to the tight junction. The protein localises to the adherens junction. Functionally, may function as a homophilic cell adhesion molecule and be essential for tight junction integrity. May also be involved in transepithelial migration of leukocytes through adhesive interactions with jaml. The interaction between both receptors may also mediate the activation of gamma-delta T-cells, a subpopulation of T-cells residing in epithelia and involved in tissue homeostasis and repair. This is Coxsackievirus and adenovirus receptor homolog (cxadr) from Danio rerio (Zebrafish).